The following is a 594-amino-acid chain: Cationic amino acid transporter 1 (594 aa).

Ala-2 carries the N-acetylalanine modification. Topologically, residues 2 to 78 are cytoplasmic; sequence ASGGGDDGLR…EMKKTLTWWD (77 aa). A helical membrane pass occupies residues 79-99; that stretch reads LMWFGIGAVIGSGIFVLTGLE. The Extracellular portion of the chain corresponds to 100–104; it reads ARNHS. N-linked (GlcNAc...) asparagine glycosylation occurs at Asn-102. A helical membrane pass occupies residues 105 to 125; it reads GPAVVLSYVVSGVSAMLSVFC. The Cytoplasmic segment spans residues 126-149; it reads YTEFAVEIPVAGGSFAYLRVELGD. The helical transmembrane segment at 150-170 threads the bilayer; the sequence is FMAFIAAGNIILEYVVGGAAV. Topologically, residues 171–201 are extracellular; sequence ARSWTSYFATLLNHKPEDFRIIVHKLGEDYS. A helical transmembrane segment spans residues 202 to 222; the sequence is HLDPIAVGVCAIICVLAVVGT. Topologically, residues 223–227 are cytoplasmic; that stretch reads KGSSR. A helical transmembrane segment spans residues 228 to 248; that stretch reads FNYIASIIHMVVILFVIIAGF. Residues 249-266 are Extracellular-facing; sequence TKADVKNYSDFTPYGVRG. Asn-255 carries N-linked (GlcNAc...) asparagine glycosylation. Residues 267–287 form a helical membrane-spanning segment; sequence VFKSAAVLFFAYIGFDAVSTM. Topologically, residues 288-297 are cytoplasmic; sequence AEETKNPGRD. Residues 298-318 traverse the membrane as a helical segment; it reads IPIGLVGSMVVTTVCYCLMAV. The Extracellular segment spans residues 319 to 348; sequence TLCLMQPYQQIDPDAPFSVAFSAVGWDWAK. The helical transmembrane segment at 349 to 369 threads the bilayer; it reads YIVAFGALKGMTTVLLVGAIG. Over 370 to 393 the chain is Cytoplasmic; it reads QARYMTHIARAHMMPPWLAQVNAK. A helical transmembrane segment spans residues 394–414; sequence TGTPINATVVMLAATALIAFF. Over 415–418 the chain is Extracellular; it reads TKLK. The chain crosses the membrane as a helical span at residues 419–439; that stretch reads ILADLLSVSTLFIFMFVAVAL. At 440–457 the chain is on the cytoplasmic side; it reads LVRRYYVTGETSTRDRNK. The chain crosses the membrane as a helical span at residues 458–478; that stretch reads FLVFLGLILASSTATAVYWAL. Over 479–483 the chain is Extracellular; the sequence is EEEGW. The chain crosses the membrane as a helical span at residues 484 to 504; sequence IGYCITVPIWFLSTVAMKFLV. The Cytoplasmic segment spans residues 505-511; it reads PQARAPK. A helical transmembrane segment spans residues 512 to 532; sequence IWGVPLVPWLPSASIAINIFL. Over 533 to 543 the chain is Extracellular; the sequence is LGSIDTKSFVR. The chain crosses the membrane as a helical span at residues 544–564; the sequence is FAIWTGILLIYYVLFGLHATY. The Cytoplasmic portion of the chain corresponds to 565-594; the sequence is DTAKATLKEKQALQKAEEGGVVADNSCSAT.

Belongs to the amino acid-polyamine-organocation (APC) superfamily. Cationic amino acid transporter (CAT) (TC 2.A.3.3) family. In terms of tissue distribution, expressed in roots, stems, flowers, petioles, seeds, siliques, and leaves. Mostly present in major veins.

It localises to the membrane. Inhibited by the protonophore 2,4-dinitrophenol. Its function is as follows. High-affinity permease involved in the transport of the cationic amino acids (e.g. arginine, lysine, histidine, citrulline, valine, and glutamate). Transport mostly basic amino acids, and, to a lower extent neutral and acidic amino acids. May function as a proton symporter. The chain is Cationic amino acid transporter 1 (CAT1) from Arabidopsis thaliana (Mouse-ear cress).